We begin with the raw amino-acid sequence, 227 residues long: Probable GTP-binding protein EngB (227 aa).

The EngB-type G domain maps to 41-216 (GRPEVAFAGR…RAEIARFAVP (176 aa)). Residues 49–56 (GRSNVGKS), 76–80 (GRTKQ), 94–97 (DMPG), 161–164 (TKCD), and 195–197 (TSS) each bind GTP. Positions 56 and 78 each coordinate Mg(2+).

This sequence belongs to the TRAFAC class TrmE-Era-EngA-EngB-Septin-like GTPase superfamily. EngB GTPase family. The cofactor is Mg(2+).

In terms of biological role, necessary for normal cell division and for the maintenance of normal septation. The chain is Probable GTP-binding protein EngB from Gluconobacter oxydans (strain 621H) (Gluconobacter suboxydans).